A 149-amino-acid polypeptide reads, in one-letter code: Macrodomain Ter protein (149 aa).

It belongs to the MatP family. In terms of assembly, homodimer.

It is found in the cytoplasm. Functionally, required for spatial organization of the terminus region of the chromosome (Ter macrodomain) during the cell cycle. Prevents early segregation of duplicated Ter macrodomains during cell division. Binds specifically to matS, which is a 13 bp signature motif repeated within the Ter macrodomain. The protein is Macrodomain Ter protein of Vibrio campbellii (strain ATCC BAA-1116).